We begin with the raw amino-acid sequence, 153 residues long: MSTKKIILKSSDGHSFEVEEEAARQCQIIIAHMSENDCTDNGIPLPNVTGKILAMVIEYCNKHHVDAANPCSDDDLKKWDKEFMEKDTSTIFDLIKAANYLNIKSLFDLACQTVAEIIKGNTPEQIREFFNIENDLTPEEEAAIRRENKWAFE.

Residues 95 to 153 (IKAANYLNIKSLFDLACQTVAEIIKGNTPEQIREFFNIENDLTPEEEAAIRRENKWAFE) are interaction with the F-box domain of F-box proteins.

It belongs to the SKP1 family. Part of a SCF (SKP1-cullin-F-box) protein ligase complex. Interacts with CPR1/CPR30 and At3g61590. In terms of tissue distribution, expressed in leaves, shoot apical meristem (SAM), roots, flowers and pollen.

It localises to the nucleus. It functions in the pathway protein modification; protein ubiquitination. Functionally, involved in ubiquitination and subsequent proteasomal degradation of target proteins. Together with CUL1, RBX1 and a F-box protein, it forms a SCF E3 ubiquitin ligase complex. The functional specificity of this complex depends on the type of F-box protein. In the SCF complex, it serves as an adapter that links the F-box protein to CUL1. In Arabidopsis thaliana (Mouse-ear cress), this protein is SKP1-like protein 9 (ASK9).